The sequence spans 118 residues: 5-hydroxyisourate hydrolase (118 aa).

Substrate contacts are provided by His-11, Arg-51, and Tyr-115.

It belongs to the transthyretin family. 5-hydroxyisourate hydrolase subfamily. In terms of assembly, homotetramer.

It is found in the peroxisome. The enzyme catalyses 5-hydroxyisourate + H2O = 5-hydroxy-2-oxo-4-ureido-2,5-dihydro-1H-imidazole-5-carboxylate + H(+). Its pathway is purine metabolism; urate degradation; (S)-allantoin from urate: step 2/3. Catalyzes the hydrolysis of 5-hydroxyisourate (HIU) to 2-oxo-4-hydroxy-4-carboxy-5-ureidoimidazoline (OHCU). The chain is 5-hydroxyisourate hydrolase (Urah) from Mus musculus (Mouse).